An 849-amino-acid polypeptide reads, in one-letter code: G-type lectin S-receptor-like serine/threonine-protein kinase At4g11900 (849 aa).

An N-terminal signal peptide occupies residues 1–26 (MQICKKNVFLLYYGVLVFLSFQVSSS). One can recognise a Bulb-type lectin domain in the interval 27 to 180 (TDTISTNQPL…PNSSAAVLWQ (154 aa)). The Extracellular portion of the chain corresponds to 27–466 (TDTISTNQPL…RKTEHSKGKS (440 aa)). Asn111, Asn148, Asn172, and Asn232 each carry an N-linked (GlcNAc...) asparagine glycan. The region spanning 311–348 (PDNRCDVYNSCGSFGICNENREPPPCRCVPGFKREFSQ) is the EGF-like domain. Cystine bridges form between Cys315/Cys327, Cys321/Cys336, Cys401/Cys421, and Cys405/Cys411. The PAN domain occupies 368–447 (CYKRNDEFLP…KGHTFFLRLA (80 aa)). Asn450 carries an N-linked (GlcNAc...) asparagine glycan. A helical transmembrane segment spans residues 467-487 (IVLPLVLASLVATAACFVGLY). The Cytoplasmic portion of the chain corresponds to 488-849 (CCISSRIRRK…EATQTELEAR (362 aa)). The Protein kinase domain maps to 537-822 (FSRKKKLGEG…TLPIPKQPTF (286 aa)). ATP contacts are provided by residues 543 to 551 (LGEGGFGPV) and Lys565. Ser571 carries the post-translational modification Phosphoserine. The caM-binding stretch occupies residues 626 to 643 (LKSRELDWETRMKIVNGT). The active-site Proton acceptor is Asp662. Phosphoserine occurs at positions 666 and 679. The residue at position 696 (Thr696) is a Phosphothreonine. Ser837 carries the post-translational modification Phosphoserine. Thr844 carries the phosphothreonine modification.

The protein belongs to the protein kinase superfamily. Ser/Thr protein kinase family.

The protein resides in the cell membrane. It catalyses the reaction L-seryl-[protein] + ATP = O-phospho-L-seryl-[protein] + ADP + H(+). The enzyme catalyses L-threonyl-[protein] + ATP = O-phospho-L-threonyl-[protein] + ADP + H(+). The protein is G-type lectin S-receptor-like serine/threonine-protein kinase At4g11900 of Arabidopsis thaliana (Mouse-ear cress).